The chain runs to 463 residues: ATP-dependent protease ATPase subunit HslU (463 aa).

ATP is bound by residues isoleucine 19, 61-66 (GVGKTE), aspartate 277, glutamate 341, and arginine 413.

It belongs to the ClpX chaperone family. HslU subfamily. A double ring-shaped homohexamer of HslV is capped on each side by a ring-shaped HslU homohexamer. The assembly of the HslU/HslV complex is dependent on binding of ATP.

The protein localises to the cytoplasm. Its function is as follows. ATPase subunit of a proteasome-like degradation complex; this subunit has chaperone activity. The binding of ATP and its subsequent hydrolysis by HslU are essential for unfolding of protein substrates subsequently hydrolyzed by HslV. HslU recognizes the N-terminal part of its protein substrates and unfolds these before they are guided to HslV for hydrolysis. The chain is ATP-dependent protease ATPase subunit HslU from Bacillus cytotoxicus (strain DSM 22905 / CIP 110041 / 391-98 / NVH 391-98).